A 1876-amino-acid polypeptide reads, in one-letter code: Phenolphthiocerol/phthiocerol polyketide synthase subunit A (1876 aa).

N-acetylthreonine is present on Thr2. One can recognise a Carrier 1 domain in the interval 9–83; it reads ADLRHWLIDY…ALAAYLAAPE (75 aa). The residue at position 43 (Ser43) is an O-(pantetheine 4'-phosphoryl)serine. Residues 101–526 form the Ketosynthase family 3 (KS3) domain; it reads DEPIAVVGMG…GTNAHVVIEQ (426 aa). Active-site for beta-ketoacyl synthase activity residues include Cys273, His408, and His448. The acyltransferase stretch occupies residues 626–950; the sequence is SPGPGTVFVY…NLNKAHTIHP (325 aa). Ser720 (for malonyltransferase activity) is an active-site residue. The N-terminal hotdog fold stretch occupies residues 997 to 1112; the sequence is HTTVATVSAS…AQLSSSPSDS (116 aa). The PKS/mFAS DH domain maps to 997 to 1267; that stretch reads HTTVATVSAS…YRALDFGLDV (271 aa). His1027 serves as the catalytic Proton acceptor; for dehydratase activity. Residues 1102-1130 form a disordered region; it reads TAQLSSSPSDSASSLNEHHRANGQPPERA. Residues 1106-1115 show a composition bias toward low complexity; sequence SSSPSDSASS. The tract at residues 1130–1267 is C-terminal hotdog fold; that stretch reads AHRDLIPDLA…YRALDFGLDV (138 aa). Catalysis depends on Asp1186, which acts as the Proton donor; for dehydratase activity. Residue 1491 to 1551 coordinates NADP(+); it reads AAYLITGGLG…RRRIDAIRAL (61 aa). A beta-ketoacyl reductase region spans residues 1491-1728; that stretch reads AAYLITGGLG…DGYDVAQAVV (238 aa). The Carrier 2 domain occupies 1759-1836; sequence EVRSELEQGL…SLASYLAKRV (78 aa). Ser1796 is subject to O-(pantetheine 4'-phosphoryl)serine.

Requires NADP(+) as cofactor. It depends on pantetheine 4'-phosphate as a cofactor.

The catalysed reaction is icosanoyl-[(phenol)carboxyphthiodiolenone synthase] + 2 (S)-methylmalonyl-CoA + 3 malonyl-CoA + 5 NADPH + 10 H(+) = C32-carboxyphthiodiolenone-[(phenol)carboxyphthiodiolenone synthase] + 5 CO2 + 5 NADP(+) + 5 CoA + 2 H2O. The enzyme catalyses docosanoyl-[(phenol)carboxyphthiodiolenone synthase] + 2 (S)-methylmalonyl-CoA + 3 malonyl-CoA + 5 NADPH + 10 H(+) = C34-carboxyphthiodiolenone-[(phenol)carboxyphthiodiolenone synthase] + 5 CO2 + 5 NADP(+) + 5 CoA + 2 H2O. It carries out the reaction 17-(4-hydroxyphenyl)heptadecanoyl-[(phenol)carboxyphthiodiolenone synthase] + 2 (S)-methylmalonyl-CoA + 3 malonyl-CoA + 5 NADPH + 10 H(+) = C35-(phenol)carboxyphthiodiolenone-[(phenol)carboxyphthiodiolenone synthase] + 5 CO2 + 5 NADP(+) + 5 CoA + 2 H2O. It catalyses the reaction 19-(4-hydroxyphenyl)nonadecanoyl-[(phenol)carboxyphthiodiolenone synthase] + 2 (S)-methylmalonyl-CoA + 3 malonyl-CoA + 5 NADPH + 10 H(+) = C37-(phenol)carboxyphthiodiolenone-[(phenol)carboxyphthiodiolenone synthase] + 5 CO2 + 5 NADP(+) + 5 CoA + 2 H2O. It functions in the pathway lipid metabolism; fatty acid biosynthesis. In terms of biological role, part of the PpsABCDE complex involved in the biosynthesis of the lipid core common to phthiocerols and phenolphthiocerols by successive additions of malonyl-CoA or methylmalonyl-CoA extender units. PpsA can accept as substrate the activated forms of either icosanoyl (C20), docosanoyl (C22) or lignoceroyl (C24) groups from FadD26, or a (4-hydroxyphenyl)-C17 or (4-hydroxyphenyl)-C19 fatty acyl from FadD29. PpsA initiates the biosynthesis and extends its substrate using a malonyl-CoA extender unit. The PpsB and PpsC proteins add the second and third malonyl-CoA extender units. PpsD adds an (R)-methylmalonyl unit and PpsE adds a second (R)-methylmalonyl unit. The incorporation of the methylmalonyl units results in formation of two branched methyl groups in the elongated product. The chain is Phenolphthiocerol/phthiocerol polyketide synthase subunit A (ppsA) from Mycobacterium tuberculosis (strain ATCC 25618 / H37Rv).